We begin with the raw amino-acid sequence, 187 residues long: Large ribosomal subunit protein bL9 (187 aa).

The disordered stretch occupies residues 155 to 187; the sequence is AQRGGMVTGLREEDEEEEVEETATEEGGEETAA. The span at 166 to 187 shows a compositional bias: acidic residues; the sequence is EEDEEEEVEETATEEGGEETAA.

This sequence belongs to the bacterial ribosomal protein bL9 family.

Binds to the 23S rRNA. The polypeptide is Large ribosomal subunit protein bL9 (Rhodospirillum centenum (strain ATCC 51521 / SW)).